The primary structure comprises 1013 residues: Adhesion G-protein coupled receptor G2 (1013 aa).

A signal peptide spans 1 to 37 (MLFSGGQYSPVGRPEEVLLIYKIFLVIICFHAILVTS). The Extracellular portion of the chain corresponds to 38–623 (LKENAGNSSL…TSLPPSQMMA (586 aa)). N-linked (GlcNAc...) asparagine glycans are attached at residues N44, N78, N92, N104, N128, N137, N155, N179, N187, N366, N431, N452, N457, N524, N538, N543, N547, and N593. Residues 457-615 (NTTTFAAQDP…GILLDLSRTS (159 aa)) enclose the GAIN-B domain. 2 cysteine pairs are disulfide-bonded: C566–C597 and C585–C599. The tract at residues 566-615 (CVFWDLNRNGGRGGWSSDGCSVKEKRMNETICTCSHLTSFGILLDLSRTS) is GPS. Residues 604 to 615 (SFGILLDLSRTS) form a stachel region. The chain crosses the membrane as a helical span at residues 624–644 (LTFITYIGCGLSSIFLSVTLV). The Cytoplasmic portion of the chain corresponds to 645-663 (TYIAFEKIRRDYPSKILIQ). A helical transmembrane segment spans residues 664–684 (LCAALLLLNLVFLLDSWIALY). Over 685–688 (NARG) the chain is Extracellular. The helical transmembrane segment at 689–709 (FCISVAVFLHYFLLVSFTWMG) threads the bilayer. Residues C690 and C774 are joined by a disulfide bond. Residues 710–733 (LEAFHMYLALVKVFNTYIRKYILK) lie on the Cytoplasmic side of the membrane. Residues 734–754 (FCIVGWGIPAVVVSIVLTISP) form a helical membrane-spanning segment. The Extracellular segment spans residues 755-785 (DNYGIGSYGKFPNGTPDDFCWINSSVVFYIT). An N-linked (GlcNAc...) asparagine glycan is attached at N777. Residues 786–806 (VVGYFCVIFLLNVSMFIVVLV) form a helical membrane-spanning segment. The Cytoplasmic segment spans residues 807–830 (QLCRIKKKKQLGAQRKTSIQDLRS). The chain crosses the membrane as a helical span at residues 831–851 (IAGLTFLLGITWGFAFFAWGP). Over 852 to 853 (VN) the chain is Extracellular. N853 carries an N-linked (GlcNAc...) asparagine glycan. The chain crosses the membrane as a helical span at residues 854-874 (LTFMYLFAIFNTLQGFFIFIF). N864 is a 3beta-hydroxyandrost-5-en-17-one binding site. At 875–1013 (YCAAKENVRK…RGSLHFIEQM (139 aa)) the chain is on the cytoplasmic side. The residue at position 1006 (S1006) is a Phosphoserine.

The protein belongs to the G-protein coupled receptor 2 family. Adhesion G-protein coupled receptor (ADGR) subfamily. Heterodimer of 2 chains generated by proteolytic processing; the large extracellular N-terminal fragment and the membrane-bound C-terminal fragment predominantly remain associated and non-covalently linked. Interacts with CFTR. In terms of processing, proteolytically cleaved into 2 subunits, an extracellular subunit and a seven-transmembrane subunit. Highly glycosylated. As to expression, epididymis-specific expression (at protein level). Associated with apical membranes of efferent ductule and proximal epididymal duct epithelia.

The protein localises to the apical cell membrane. Its activity is regulated as follows. Forms a heterodimer of 2 chains generated by proteolytic processing that remain associated through non-covalent interactions mediated by the GAIN-B domain. In the inactivated receptor, the Stachel sequence (also named stalk) is embedded in the GAIN-B domain, where it adopts a beta-strand conformation. On activation, the Stachel moves into the 7 transmembrane region and adopts a twisted hook-shaped configuration that forms contacts within the receptor, leading to coupling of a G-alpha protein, which activates signaling. The cleaved GAIN-B and N-terminal domains can then dissociate from the rest of the receptor. Deoxycorticosterone (DOC) acts as an antagonist of ADGRG2. Its function is as follows. Adhesion G-protein coupled receptor (aGPCR) for steroid hormones, such as dehydroepiandrosterone (DHEA; also named 3beta-hydroxyandrost-5-en-17-one) and androstenedione. Involved in a signal transduction pathway controlling epididymal function and male fertility. Ligand binding causes a conformation change that triggers signaling via guanine nucleotide-binding proteins (G proteins) and modulates the activity of downstream effectors, such as adenylate cyclase. ADGRG2 is coupled to G(s) G proteins and mediates activation of adenylate cyclase activity. Also able to couple with G(q) G proteins in vitro. May regulate fluid exchange within epididymis. The chain is Adhesion G-protein coupled receptor G2 from Rattus norvegicus (Rat).